A 198-amino-acid chain; its full sequence is NADH-quinone oxidoreductase subunit B (198 aa).

A compositionally biased stretch (polar residues) spans 1-20 (MGLNPTQVSTSGSPQVSQPA). A disordered region spans residues 1–29 (MGLNPTQVSTSGSPQVSQPATGVLDPRTG). [4Fe-4S] cluster-binding residues include C77, C78, C142, and C172.

Belongs to the complex I 20 kDa subunit family. In terms of assembly, NDH-1 is composed of 14 different subunits. Subunits NuoB, C, D, E, F, and G constitute the peripheral sector of the complex. [4Fe-4S] cluster serves as cofactor.

Its subcellular location is the cell inner membrane. It catalyses the reaction a quinone + NADH + 5 H(+)(in) = a quinol + NAD(+) + 4 H(+)(out). NDH-1 shuttles electrons from NADH, via FMN and iron-sulfur (Fe-S) centers, to quinones in the respiratory chain. The immediate electron acceptor for the enzyme in this species is believed to be ubiquinone. Couples the redox reaction to proton translocation (for every two electrons transferred, four hydrogen ions are translocated across the cytoplasmic membrane), and thus conserves the redox energy in a proton gradient. The chain is NADH-quinone oxidoreductase subunit B from Afipia carboxidovorans (strain ATCC 49405 / DSM 1227 / KCTC 32145 / OM5) (Oligotropha carboxidovorans).